A 71-amino-acid chain; its full sequence is Large ribosomal subunit protein uL29 (71 aa).

Belongs to the universal ribosomal protein uL29 family.

The protein is Large ribosomal subunit protein uL29 of Synechococcus sp. (strain RCC307).